A 350-amino-acid chain; its full sequence is Ubiquitin carboxyl-terminal hydrolase 11 (350 aa).

The USP domain occupies 49–344 (KGLYNVSGND…SACLLFYEME (296 aa)). The active-site Nucleophile is the Cys-59. The Proton acceptor role is filled by His-302.

Belongs to the peptidase C19 family.

It carries out the reaction Thiol-dependent hydrolysis of ester, thioester, amide, peptide and isopeptide bonds formed by the C-terminal Gly of ubiquitin (a 76-residue protein attached to proteins as an intracellular targeting signal).. In Schizosaccharomyces pombe (strain 972 / ATCC 24843) (Fission yeast), this protein is Ubiquitin carboxyl-terminal hydrolase 11 (ubp11).